A 198-amino-acid chain; its full sequence is Protein-L-isoaspartate O-methyltransferase (198 aa).

The active site involves Ser-50.

It belongs to the methyltransferase superfamily. L-isoaspartyl/D-aspartyl protein methyltransferase family.

It is found in the cytoplasm. The enzyme catalyses [protein]-L-isoaspartate + S-adenosyl-L-methionine = [protein]-L-isoaspartate alpha-methyl ester + S-adenosyl-L-homocysteine. Catalyzes the methyl esterification of L-isoaspartyl residues in peptides and proteins that result from spontaneous decomposition of normal L-aspartyl and L-asparaginyl residues. It plays a role in the repair and/or degradation of damaged proteins. In Thermosipho melanesiensis (strain DSM 12029 / CIP 104789 / BI429), this protein is Protein-L-isoaspartate O-methyltransferase.